The following is a 282-amino-acid chain: Putative polysaccharide deacetylase YheN (282 aa).

The helical transmembrane segment at L15–L35 threads the bilayer. Residues K85–G271 form the NodB homology domain.

Belongs to the polysaccharide deacetylase family.

The protein localises to the cell membrane. In Bacillus subtilis (strain 168), this protein is Putative polysaccharide deacetylase YheN (yheN).